The primary structure comprises 493 residues: MAMSNTSALASKLLPSCKPHQPTLTFFSPSTTCQKKPRSSRPISAAVHVTQPPKTPISSATATKRRLSLLNGVWESWKSKKALQLPEYPDEGKLDGVLKTIEAFPPLVFAGEARSLEEKLAQAAMGNAFLLQGGDCAESFKELMPLYSRYFQNTASDECRLTFGGQCPVIKVGRMAGQFAKPRLDPFEEKDGLWLSGANGWPVAWEAYCKLQQLSPSRALLLVVCCYAESHPMDLDFVEHSEQGDRYQELAHRVDEALGFMDACGLTVDHPIMATTEFWTSHECLLLPYEQALTREDSTSGLFYDCSAHMLWVGERTRQLDGAHVEFLRGVANPLGIKVSQKMDPNELVNLIEILNPTNKPGRITVIVRMGAENMRVKLPHLIRAVRGAGQIVTWVCDPMHGNTIKAPCGLKTRAFDAILAEVRAFYDVHEQEGTLPGTECVGGSRTITYDDRQTRYHTHCDPRLNASQSLELAFIIAERLRKEESVLNAHSP.

A chloroplast-targeting transit peptide spans 1-58; that stretch reads MAMSNTSALASKLLPSCKPHQPTLTFFSPSTTCQKKPRSSRPISAAVHVTQPPKTPIS.

Belongs to the class-II DAHP synthase family.

It localises to the plastid. It is found in the chloroplast. It catalyses the reaction D-erythrose 4-phosphate + phosphoenolpyruvate + H2O = 7-phospho-2-dehydro-3-deoxy-D-arabino-heptonate + phosphate. It participates in metabolic intermediate biosynthesis; chorismate biosynthesis; chorismate from D-erythrose 4-phosphate and phosphoenolpyruvate: step 1/7. In Catharanthus roseus (Madagascar periwinkle), this protein is Probable phospho-2-dehydro-3-deoxyheptonate aldolase, chloroplastic (DHS1).